We begin with the raw amino-acid sequence, 391 residues long: Casein kinase II subunit alpha (391 aa).

An interaction with beta subunit region spans residues 36–41 (QDDYQL). The region spanning 39–324 (YQLVRKLGRG…AREAMEHPYF (286 aa)) is the Protein kinase domain. Residues 45 to 53 (LGRGKYSEV) and lysine 68 contribute to the ATP site. Aspartate 156 serves as the catalytic Proton acceptor. Phosphothreonine; by CDK1 occurs at positions 344 and 360. Phosphoserine; by CDK1 occurs at positions 362 and 370.

The protein belongs to the protein kinase superfamily. Ser/Thr protein kinase family. CK2 subfamily. In terms of assembly, heterotetramer composed of two catalytic subunits (alpha chain and/or alpha' chain) and two regulatory subunits (beta chains). The tetramer can exist as a combination of 2 alpha/2 beta, 2 alpha'/2 beta or 1 alpha/1 alpha'/2 beta subunits. Also part of a CK2-SPT16-SSRP1 complex composed of SSRP1, SUPT16H, CSNK2A1, CSNK2A2 and CSNK2B, which forms following UV irradiation. Interacts with RNPS1. Interacts with SNAI1. Interacts with PML. Interacts with CCAR2. Interacts with HIRIP3. In terms of processing, phosphorylated at Thr-344, Thr-360, Ser-362 and Ser-370 by CDK1 in prophase and metaphase and dephosphorylated during anaphase. Phosphorylation does not directly affect casein kinase 2 activity, but may contribute to its regulation by forming binding sites for interacting proteins and/or targeting it to different compartments.

The protein localises to the nucleus. It carries out the reaction L-seryl-[protein] + ATP = O-phospho-L-seryl-[protein] + ADP + H(+). The enzyme catalyses L-threonyl-[protein] + ATP = O-phospho-L-threonyl-[protein] + ADP + H(+). With respect to regulation, constitutively active protein kinase whose activity is not directly affected by phosphorylation. Seems to be regulated by level of expression and localization. Functionally, catalytic subunit of a constitutively active serine/threonine-protein kinase complex that phosphorylates a large number of substrates containing acidic residues C-terminal to the phosphorylated serine or threonine. Regulates numerous cellular processes, such as cell cycle progression, apoptosis and transcription, as well as viral infection. May act as a regulatory node which integrates and coordinates numerous signals leading to an appropriate cellular response. During mitosis, functions as a component of the p53/TP53-dependent spindle assembly checkpoint (SAC) that maintains cyclin-B-CDK1 activity and G2 arrest in response to spindle damage. Also required for p53/TP53-mediated apoptosis, phosphorylating 'Ser-392' of p53/TP53 following UV irradiation. Phosphorylates a number of DNA repair proteins in response to DNA damage, such as MDC1, MRE11, RAD9A, RAD51 and HTATSF1, promoting their recruitment to DNA damage sites. Can also negatively regulate apoptosis. Phosphorylates the caspases CASP9 and CASP2 and the apoptotic regulator NOL3. Phosphorylation protects CASP9 from cleavage and activation by CASP8, and inhibits the dimerization of CASP2 and activation of CASP8. Phosphorylates YY1, protecting YY1 from cleavage by CASP7 during apoptosis. Regulates transcription by direct phosphorylation of RNA polymerases I, II, III and IV. Also phosphorylates and regulates numerous transcription factors including NF-kappa-B, STAT1, CREB1, IRF1, IRF2, ATF1, ATF4, SRF, MAX, JUN, FOS, MYC and MYB. Phosphorylates Hsp90 and its co-chaperones FKBP4 and CDC37, which is essential for chaperone function. Mediates sequential phosphorylation of FNIP1, promoting its gradual interaction with Hsp90, leading to activate both kinase and non-kinase client proteins of Hsp90. Regulates Wnt signaling by phosphorylating CTNNB1 and the transcription factor LEF1. Acts as an ectokinase that phosphorylates several extracellular proteins. Plays an important role in the circadian clock function by phosphorylating BMAL1 at 'Ser-90' which is pivotal for its interaction with CLOCK and which controls CLOCK nuclear entry. Phosphorylates FMR1, promoting FMR1-dependent formation of a membraneless compartment. May phosphorylate histone H2A on 'Ser-1'. This is Casein kinase II subunit alpha (CSNK2A1) from Bos taurus (Bovine).